A 155-amino-acid polypeptide reads, in one-letter code: uncharacterized protein (155 aa).

Disordered regions lie at residues 24–63 (RVGY…VVLK) and 80–155 (KAAK…DENE). Residues 43–56 (PDEDGNESDKEDEQ) are compositionally biased toward acidic residues. The residue at position 50 (serine 50) is a Phosphoserine. Position 108 is an N6-acetyllysine (lysine 108). The segment covering 128-147 (KQSPVRKNSQKQIKNSSLLS) has biased composition (polar residues). Phosphoserine is present on residues serine 130, serine 147, and serine 150.

This is an uncharacterized protein from Rattus norvegicus (Rat).